The following is a 300-amino-acid chain: Ribosomal RNA small subunit methyltransferase H (300 aa).

Residues 46–48 (GGH), D65, F92, D107, and Q114 contribute to the S-adenosyl-L-methionine site.

The protein belongs to the methyltransferase superfamily. RsmH family.

Its subcellular location is the cytoplasm. It catalyses the reaction cytidine(1402) in 16S rRNA + S-adenosyl-L-methionine = N(4)-methylcytidine(1402) in 16S rRNA + S-adenosyl-L-homocysteine + H(+). Its function is as follows. Specifically methylates the N4 position of cytidine in position 1402 (C1402) of 16S rRNA. The sequence is that of Ribosomal RNA small subunit methyltransferase H from Prochlorococcus marinus (strain MIT 9312).